Consider the following 551-residue polypeptide: Preprotein translocase subunit SCY1, chloroplastic (551 aa).

A chloroplast-targeting transit peptide spans 1–67; the sequence is MITVSEVSSY…WNLGLVINSR (67 aa). Transmembrane regions (helical) follow at residues 142 to 162, 192 to 212, 241 to 261, 268 to 288, 295 to 315, 328 to 348, 382 to 402, 415 to 435, 482 to 502, and 503 to 523; these read FLKLLGFLALSRLGIYIPLGG, LGICSLGIVPFINAQIVFQLL, ASVGFAIVQAIGQVFYLRPYV, WVVSSVTLLTLGSVLTTYIGE, LGNGTSLLIFTSIISYLPASF, YTGLGTIVVSFLLLVLGIVYV, SAGVMPIIFSTSSLALPATLA, FALTPGGSFYLPTNILLIAFF, VLGSAFLAVLAAGPAVVEQIT, and HLTAFRGFAGTSVLILVGCAT.

Belongs to the SecY/SEC61-alpha family. In terms of assembly, part of the Sec protein translocation apparatus. Interacts with SECE1, ALB3 and probably with SECA1.

The protein resides in the plastid. It is found in the chloroplast thylakoid membrane. Functionally, involved in protein export. Probably interacts with other proteins to allow the translocation of proteins across the chloroplast thylakoid membranes. Required for normal greening during embryogenesis. Central subunit of the protein translocation channel SecYE. Consists of two halves formed by TMs 1-5 and 6-10. These two domains form a lateral gate at the front which open onto the bilayer between TMs 2 and 7, and are clamped together by SecE at the back. The channel is closed by both a pore ring composed of hydrophobic SecY resides and a short helix (helix 2A) on the extracellular side of the membrane which forms a plug. In Arabidopsis thaliana (Mouse-ear cress), this protein is Preprotein translocase subunit SCY1, chloroplastic (SCY1).